A 1179-amino-acid polypeptide reads, in one-letter code: Serine/threonine-protein kinase pakG (1179 aa).

A coiled-coil region spans residues 12–53 (SKTNEDIELIKQKLKEDRELLEKERAQFEEERKIIFESLNKV). The CRIB domain occupies 111–124 (IGTPFNVQHKVHVD). In terms of domain architecture, Protein kinase spans 139–390 (FLIDCILGTG…AIELLTHPFL (252 aa)). ATP is bound by residues 145–153 (LGTGSYGTV) and Lys168. The Proton acceptor role is filled by Asp257. Disordered regions lie at residues 414–469 (KKKK…SSLD), 589–631 (IGNS…NNNN), 705–1086 (SSSS…PITL), and 1121–1179 (TEIN…SPKK). The stretch at 621-668 (NNNNNNNNNNNEFLINQIKKELILDFNENMKQYINQQLTNLKEEMLKE) forms a coiled coil. Composition is skewed to low complexity over residues 705–723 (SSSS…SNSS) and 743–761 (LPPS…TSSP). Positions 762–776 (SPSPSPSPSPSPSSP) are enriched in pro residues. 2 stretches are compositionally biased toward low complexity: residues 777–788 (LPSSSTSTVNTP) and 812–833 (NNNN…NNNN). Residues 834–857 (VIQSPKLNNRPLSPTTPTKQFNNR) are compositionally biased toward polar residues. Residues 864–891 (FNNRPPSPSKFNNRPPSPSNRPLSPKNS) are compositionally biased toward low complexity. A compositionally biased stretch (polar residues) spans 892 to 946 (YNSLEKSNNGSISNNRPLSPKNSLEKSTTQNNTSSEDISTTTVTVTSEQGGTPIT). The span at 954–963 (RPKPSPPPIP) shows a compositional bias: pro residues. 3 stretches are compositionally biased toward low complexity: residues 964-997 (MNKS…TIAA), 1024-1046 (TTIT…SPNS), and 1053-1077 (ITTS…SSSN). Positions 1121–1135 (TEINLPSSSPSTPQK) are enriched in polar residues. Residues 1137 to 1158 (NTPSSIPTTPTTPTTNGGSVSS) are compositionally biased toward low complexity.

This sequence belongs to the protein kinase superfamily. STE Ser/Thr protein kinase family. STE20 subfamily. Mg(2+) is required as a cofactor.

It carries out the reaction L-seryl-[protein] + ATP = O-phospho-L-seryl-[protein] + ADP + H(+). The catalysed reaction is L-threonyl-[protein] + ATP = O-phospho-L-threonyl-[protein] + ADP + H(+). This chain is Serine/threonine-protein kinase pakG, found in Dictyostelium discoideum (Social amoeba).